Here is a 160-residue protein sequence, read N- to C-terminus: DNA polymerase delta subunit 4 (160 aa).

The interval 1–48 (MKKRTTQAKKSGQNTNIRDVFPHVVRSNSSQSHIGKKVSSEQSPTPDV) is disordered. Over residues 8-17 (AKKSGQNTNI) the composition is skewed to polar residues.

This sequence belongs to the DNA polymerase delta subunit 4 family. Heterotetramer that consist of the pol3, cdc1, cdc27 and cdm1 subunits. Interacts with cdc1 and pol3.

Its subcellular location is the nucleus. In terms of biological role, appears to have a role in the stabilization of the DNA polymerase delta complex. The sequence is that of DNA polymerase delta subunit 4 (cdm1) from Schizosaccharomyces pombe (strain 972 / ATCC 24843) (Fission yeast).